A 146-amino-acid polypeptide reads, in one-letter code: Prefoldin subunit alpha (146 aa).

It belongs to the prefoldin alpha subunit family. In terms of assembly, heterohexamer of two alpha and four beta subunits.

The protein localises to the cytoplasm. Functionally, molecular chaperone capable of stabilizing a range of proteins. Seems to fulfill an ATP-independent, HSP70-like function in archaeal de novo protein folding. This chain is Prefoldin subunit alpha, found in Methanococcus vannielii (strain ATCC 35089 / DSM 1224 / JCM 13029 / OCM 148 / SB).